A 928-amino-acid chain; its full sequence is ATP-dependent DNA helicase PIF5 (928 aa).

The transit peptide at 1 to 49 directs the protein to the mitochondrion; sequence MLSRLSAVWRPSRVALRIQRVDFTTCGNRLNRSTQPNEPPLVSGIAARS. 2 disordered regions span residues 29 to 141 and 176 to 231; these read RLNR…DVAI and LRAK…FSDA. A compositionally biased stretch (basic and acidic residues) spans 52–61; the sequence is AKAEPVEKRG. An ATP-binding site is contributed by 264-271; it reads GGAGSGKS. Disordered regions lie at residues 389–421, 481–513, 545–572, and 585–607; these read PIPPRNKPQQKTEENAEAQEGGDPTDGTPAPSK, KSSAKSRKKKDEDAGNDGVLPLTDAETTPAAAE, IYPSPNDGSSQQTGSSNGANSVTEEDTM, and STHETEPETTEETTTGTQPSQPW. The span at 550–566 shows a compositional bias: polar residues; that stretch reads NDGSSQQTGSSNGANSV. A DNA-binding region spans residues 858–877; sequence QAYVALSRSTRLDNIRLLDF. The disordered stretch occupies residues 898 to 928; sequence EELDNEIEDDGTEGDEEALEGDGEYEGEVEE.

The protein belongs to the helicase family. PIF1 subfamily. As to quaternary structure, monomer. The cofactor is Mg(2+).

The protein resides in the mitochondrion. The enzyme catalyses Couples ATP hydrolysis with the unwinding of duplex DNA at the replication fork by translocating in the 5'-3' direction. This creates two antiparallel DNA single strands (ssDNA). The leading ssDNA polymer is the template for DNA polymerase III holoenzyme which synthesizes a continuous strand.. It carries out the reaction ATP + H2O = ADP + phosphate + H(+). Functionally, DNA-dependent ATPase and 5'-3' DNA helicase required for the maintenance of mitochondrial (kinetoplast) genome stability. Involved in processing of minicircle Okazaki fragments. This Trypanosoma brucei brucei (strain 927/4 GUTat10.1) protein is ATP-dependent DNA helicase PIF5.